The chain runs to 349 residues: Anthranilate phosphoribosyltransferase (349 aa).

5-phospho-alpha-D-ribose 1-diphosphate-binding positions include G94, 97–98, T102, 104–107, 122–130, and S134; these read GD, NIST, and KHGNRSVSS. G94 is an anthranilate binding site. S106 is a binding site for Mg(2+). N125 provides a ligand contact to anthranilate. Residue R180 participates in anthranilate binding. D239 and E240 together coordinate Mg(2+).

The protein belongs to the anthranilate phosphoribosyltransferase family. As to quaternary structure, homodimer. The cofactor is Mg(2+).

It catalyses the reaction N-(5-phospho-beta-D-ribosyl)anthranilate + diphosphate = 5-phospho-alpha-D-ribose 1-diphosphate + anthranilate. It participates in amino-acid biosynthesis; L-tryptophan biosynthesis; L-tryptophan from chorismate: step 2/5. In terms of biological role, catalyzes the transfer of the phosphoribosyl group of 5-phosphorylribose-1-pyrophosphate (PRPP) to anthranilate to yield N-(5'-phosphoribosyl)-anthranilate (PRA). The polypeptide is Anthranilate phosphoribosyltransferase (Trichlorobacter lovleyi (strain ATCC BAA-1151 / DSM 17278 / SZ) (Geobacter lovleyi)).